The sequence spans 376 residues: D-alanine--D-alanine ligase (376 aa).

The ATP-grasp domain occupies 150 to 358 (KIIFEKEGLP…YSELINKLIE (209 aa)). 183–238 (EGRLTYPCFVKPSNAGSSVGVNKASDRESLVKALNIAAKNDRRILVEEFINGREIE) is a binding site for ATP. Asp-311, Glu-325, and Asn-327 together coordinate Mg(2+).

This sequence belongs to the D-alanine--D-alanine ligase family. Mg(2+) serves as cofactor. Requires Mn(2+) as cofactor.

It localises to the cytoplasm. It catalyses the reaction 2 D-alanine + ATP = D-alanyl-D-alanine + ADP + phosphate + H(+). Its pathway is cell wall biogenesis; peptidoglycan biosynthesis. Its function is as follows. Cell wall formation. The sequence is that of D-alanine--D-alanine ligase from Ruminiclostridium cellulolyticum (strain ATCC 35319 / DSM 5812 / JCM 6584 / H10) (Clostridium cellulolyticum).